The chain runs to 236 residues: Truncated formate dehydrogenase 2 (236 aa).

NAD(+) contacts are provided by residues 36-37 (RI), aspartate 57, 104-108 (PLHKD), threonine 130, aspartate 156, and 185-188 (HISG).

This sequence belongs to the D-isomer specific 2-hydroxyacid dehydrogenase family. FDH subfamily.

This chain is Truncated formate dehydrogenase 2, found in Saccharomyces cerevisiae (strain ATCC 204508 / S288c) (Baker's yeast).